The sequence spans 208 residues: Guanylate kinase (208 aa).

One can recognise a Guanylate kinase-like domain in the interval 4 to 181; that stretch reads GLLIVISGPS…AVEKIQSIIS (178 aa). 11–18 contributes to the ATP binding site; that stretch reads GPSGTGKG.

It belongs to the guanylate kinase family.

It localises to the cytoplasm. It catalyses the reaction GMP + ATP = GDP + ADP. Essential for recycling GMP and indirectly, cGMP. The sequence is that of Guanylate kinase from Clostridium tetani (strain Massachusetts / E88).